The following is a 757-amino-acid chain: Inhibitor of nuclear factor kappa-B kinase subunit beta (757 aa).

The Protein kinase domain maps to 15–300 (WEMKERLGTG…DPQYGPNGCF (286 aa)). ATP-binding positions include 21–29 (LGTGGFGNV) and lysine 44. Aspartate 145 (proton acceptor) is an active-site residue. Lysine 163 is covalently cross-linked (Glycyl lysine isopeptide (Lys-Gly) (interchain with G-Cter in ubiquitin)). At serine 177 the chain carries Phosphoserine; by TBK1 and PKC/PRKCZ. At cysteine 179 the chain carries S-nitrosocysteine. Residue serine 181 is modified to Phosphoserine; by TBK1, PKC/PRKCZ and PDPK1. Proline 191 is subject to Hydroxyproline. The segment at 458–479 (LLRNNSCLSKMKNAMASTAQQL) is leucine-zipper. Serine 670 carries the phosphoserine; by autocatalysis modification. Serine 672 carries the phosphoserine modification. Phosphoserine; by autocatalysis is present on residues serine 675, serine 682, serine 689, serine 692, serine 697, serine 705, serine 733, and serine 740. Residues 683 to 703 (HPGQLMSQPSSACDSLPESDK) form a disordered region. The interval 737-742 (LDWSWL) is NEMO-binding.

It belongs to the protein kinase superfamily. Ser/Thr protein kinase family. I-kappa-B kinase subfamily. Component of the I-kappa-B-kinase (IKK) core complex consisting of CHUK, IKBKB and IKBKG; probably four alpha/CHUK-beta/IKBKB dimers are associated with four gamma/IKBKG subunits. The IKK core complex seems to associate with regulatory or adapter proteins to form a IKK-signalosome holo-complex. The IKK complex associates with TERF2IP/RAP1, leading to promote IKK-mediated phosphorylation of RELA/p65. Part of a complex composed of NCOA2, NCOA3, CHUK/IKKA, IKBKB, IKBKG and CREBBP. Part of a 70-90 kDa complex at least consisting of CHUK/IKKA, IKBKB, NFKBIA, RELA, ELP1 and MAP3K14. Found in a membrane raft complex, at least composed of BCL10, CARD11, DPP4 and IKBKB. Interacts with SQSTM1 through PRKCZ or PRKCI. Forms an NGF-induced complex with IKBKB, PRKCI and TRAF6. May interact with MAVS/IPS1. Interacts with NALP2. Interacts with TICAM1. Interacts with FAF1; the interaction disrupts the IKK complex formation. Interacts with ATM. Part of a ternary complex consisting of TANK, IKBKB and IKBKG. Interacts with NIBP; the interaction is direct. Interacts with ARRB1 and ARRB2. Interacts with TRIM21. Interacts with NLRC5; prevents IKBKB phosphorylation and kinase activity. Interacts with PDPK1. Interacts with EIF2AK2/PKR. The phosphorylated form interacts with PPM1A and PPM1B. Interacts with ZNF268 isoform 2; the interaction is further increased in a TNF-alpha-dependent manner. Interacts with IKBKE. Interacts with ZC3H12A. Interacts with AKAP13. Interacts with LRRC14; disrupts IKBKB-IKBKG interaction preventing I-kappa-B-kinase (IKK) core complex formation and leading to a decrease of IKBKB phosphorylation and NF-kappaB activation. Interacts with SASH1. Interacts with ARFIP2. Interacts with FKBP5. Interacts with kinase TBK1; the complex interacts with STAT1, leading to phosphorylation of STAT1 on 'Thr-748' by IKBKB. In terms of processing, upon cytokine stimulation, phosphorylated on Ser-177 and Ser-181 by MEKK1 and/or MAP3K14/NIK as well as TBK1 and PRKCZ; which enhances activity. Phosphorylated by MAP3K7/TAK1 in response to NOD1 and NOD2 signaling, promoting activation and phosphorylation of NF-kappa-B inhibitors, leading to NF-kappa-B activation. Once activated, autophosphorylates on the C-terminal serine cluster; which decreases activity and prevents prolonged activation of the inflammatory response. Phosphorylated by the IKK-related kinases TBK1 and IKBKE, which is associated with reduced CHUK/IKKA and IKBKB activity and NF-kappa-B-dependent gene transcription. Dephosphorylated at Ser-177 and Ser-181 by PPM1A and PPM1B. Ubiquitinated. Monoubiquitination involves TRIM21 that leads to inhibition of Tax-induced NF-kappa-B signaling. 'Ser-163' may not serve as a monoubiquitination site. Ubiquitination on 'Ser-163' may modulate phosphorylation on C-terminal serine residues. Post-translationally, hydroxylated by PHD1/EGLN2, loss of hydroxylation under hypoxic conditions results in activation of NF-kappa-B. As to expression, detected in heart (at protein level). Expressed in liver, kidney and spleen.

The protein resides in the cytoplasm. It localises to the nucleus. The protein localises to the membrane raft. The catalysed reaction is L-seryl-[I-kappa-B protein] + ATP = O-phospho-L-seryl-[I-kappa-B protein] + ADP + H(+). It catalyses the reaction L-seryl-[protein] + ATP = O-phospho-L-seryl-[protein] + ADP + H(+). It carries out the reaction L-threonyl-[protein] + ATP = O-phospho-L-threonyl-[protein] + ADP + H(+). Serine kinase that plays an essential role in the NF-kappa-B signaling pathway which is activated by multiple stimuli such as inflammatory cytokines, bacterial or viral products, DNA damages or other cellular stresses. Acts as a part of the canonical IKK complex in the conventional pathway of NF-kappa-B activation. Phosphorylates inhibitors of NF-kappa-B on 2 critical serine residues. These modifications allow polyubiquitination of the inhibitors and subsequent degradation by the proteasome. In turn, free NF-kappa-B is translocated into the nucleus and activates the transcription of hundreds of genes involved in immune response, growth control, or protection against apoptosis. In addition to the NF-kappa-B inhibitors, phosphorylates several other components of the signaling pathway including NEMO/IKBKG, NF-kappa-B subunits RELA and NFKB1, as well as IKK-related kinases TBK1 and IKBKE. IKK-related kinase phosphorylations may prevent the overproduction of inflammatory mediators since they exert a negative regulation on canonical IKKs. Phosphorylates FOXO3, mediating the TNF-dependent inactivation of this pro-apoptotic transcription factor. Also phosphorylates other substrates including NAA10, NCOA3, BCL10 and IRS1. Phosphorylates RIPK1 at 'Ser-25' which represses its kinase activity and consequently prevents TNF-mediated RIPK1-dependent cell death. Phosphorylates the C-terminus of IRF5, stimulating IRF5 homodimerization and translocation into the nucleus. Following bacterial lipopolysaccharide (LPS)-induced TLR4 endocytosis, phosphorylates STAT1 at 'Thr-748' which restricts interferon signaling and anti-inflammatory responses and promotes innate inflammatory responses. IKBKB-mediated phosphorylation of STAT1 at 'Thr-748' promotes binding of STAT1 to the ARID5A promoter, resulting in transcriptional activation of ARID5A and subsequent ARID5A-mediated stabilization of IL6. It also promotes binding of STAT1 to the IL12B promoter and activation of IL12B transcription. This chain is Inhibitor of nuclear factor kappa-B kinase subunit beta (Ikbkb), found in Mus musculus (Mouse).